Reading from the N-terminus, the 577-residue chain is Proline--tRNA ligase (577 aa).

It belongs to the class-II aminoacyl-tRNA synthetase family. ProS type 1 subfamily. Homodimer.

Its subcellular location is the cytoplasm. It catalyses the reaction tRNA(Pro) + L-proline + ATP = L-prolyl-tRNA(Pro) + AMP + diphosphate. In terms of biological role, catalyzes the attachment of proline to tRNA(Pro) in a two-step reaction: proline is first activated by ATP to form Pro-AMP and then transferred to the acceptor end of tRNA(Pro). As ProRS can inadvertently accommodate and process non-cognate amino acids such as alanine and cysteine, to avoid such errors it has two additional distinct editing activities against alanine. One activity is designated as 'pretransfer' editing and involves the tRNA(Pro)-independent hydrolysis of activated Ala-AMP. The other activity is designated 'posttransfer' editing and involves deacylation of mischarged Ala-tRNA(Pro). The misacylated Cys-tRNA(Pro) is not edited by ProRS. This chain is Proline--tRNA ligase, found in Helicobacter pylori (strain G27).